The following is a 242-amino-acid chain: Probable transcriptional regulatory protein Bxeno_A1185 (242 aa).

Belongs to the TACO1 family.

The protein resides in the cytoplasm. The polypeptide is Probable transcriptional regulatory protein Bxeno_A1185 (Paraburkholderia xenovorans (strain LB400)).